A 695-amino-acid polypeptide reads, in one-letter code: Methionine synthase reductase (695 aa).

A Flavodoxin-like domain is found at 4–147 (FLLLYATQRG…VVEPWINGLW (144 aa)). Residues 10–14 (TQRGQ) and 93–124 (LLGL…QRFY) contribute to the FMN site. The segment at 166 to 245 (TLTMASHASR…ASLNIPSLPP (80 aa)) is hinge. Ser171 and Ser187 each carry phosphoserine. The FAD-binding FR-type domain occupies 269 to 531 (DPVFHVPVSK…PRTTNSFHLP (263 aa)). NADP(+) is bound at residue Lys289. FAD contacts are provided by residues 449-452 (RPYS) and 485-488 (GVCT). Residues 608–609 (SR), 622–624 (YVQ), and Asp657 each bind NADP(+). FAD is bound at residue Trp695.

In terms of assembly, forms a multiprotein complex with MMACHC, MMADHC and MTR. The cofactor is FAD. FMN is required as a cofactor.

It localises to the cytoplasm. It catalyses the reaction 2 methylcob(III)alamin-[methionine synthase] + 2 S-adenosyl-L-homocysteine + NADP(+) + H(+) = 2 cob(II)alamin-[methionine synthase] + 2 S-adenosyl-L-methionine + NADPH. The catalysed reaction is 2 cob(II)alamin + A + 2 H2O + 2 H(+) = 2 aquacob(III)alamin + AH2. In terms of biological role, key enzyme in methionine and folate homeostasis responsible for the reactivation of methionine synthase (MTR/MS) activity by catalyzing the reductive methylation of MTR-bound cob(II)alamin. Cobalamin (vitamin B12) forms a complex with MTR to serve as an intermediary in methyl transfer reactions that cycles between MTR-bound methylcob(III)alamin and MTR bound-cob(I)alamin forms, and occasional oxidative escape of the cob(I)alamin intermediate during the catalytic cycle leads to the inactive cob(II)alamin species. The processing of cobalamin in the cytosol occurs in a multiprotein complex composed of at least MMACHC, MMADHC, MTRR and MTR which may contribute to shuttle safely and efficiently cobalamin towards MTR in order to produce methionine. Also necessary for the utilization of methyl groups from the folate cycle, thereby affecting transgenerational epigenetic inheritance. Also acts as a molecular chaperone for methionine synthase by stabilizing apoMTR and incorporating methylcob(III)alamin into apoMTR to form the holoenzyme. Also serves as an aquacob(III)alamin reductase by reducing aquacob(III)alamin to cob(II)alamin; this reduction leads to stimulation of the conversion of apoMTR and aquacob(III)alamin to MTR holoenzyme. The polypeptide is Methionine synthase reductase (MTRR) (Bos taurus (Bovine)).